Here is a 706-residue protein sequence, read N- to C-terminus: DNA ligase (706 aa).

Residues 48–52, 97–98, and E131 each bind NAD(+); these read DAAYD and SL. The N6-AMP-lysine intermediate role is filled by K133. 4 residues coordinate NAD(+): R154, E191, K307, and K331. Residues C425, C428, C443, and C449 each coordinate Zn(2+). The region spanning 628–706 is the BRCT domain; the sequence is RADSAVAGKT…EDEWLKLIEG (79 aa).

The protein belongs to the NAD-dependent DNA ligase family. LigA subfamily. Requires Mg(2+) as cofactor. Mn(2+) is required as a cofactor.

The enzyme catalyses NAD(+) + (deoxyribonucleotide)n-3'-hydroxyl + 5'-phospho-(deoxyribonucleotide)m = (deoxyribonucleotide)n+m + AMP + beta-nicotinamide D-nucleotide.. DNA ligase that catalyzes the formation of phosphodiester linkages between 5'-phosphoryl and 3'-hydroxyl groups in double-stranded DNA using NAD as a coenzyme and as the energy source for the reaction. It is essential for DNA replication and repair of damaged DNA. The protein is DNA ligase of Afipia carboxidovorans (strain ATCC 49405 / DSM 1227 / KCTC 32145 / OM5) (Oligotropha carboxidovorans).